A 27-amino-acid chain; its full sequence is Putative phosphoglycerate kinase (27 aa).

Belongs to the phosphoglycerate kinase family. Monomer. Mg(2+) serves as cofactor.

The catalysed reaction is (2R)-3-phosphoglycerate + ATP = (2R)-3-phospho-glyceroyl phosphate + ADP. The polypeptide is Putative phosphoglycerate kinase (Pinus strobus (Eastern white pine)).